A 289-amino-acid chain; its full sequence is Probable WRKY transcription factor 38 (289 aa).

The interval 62 to 103 is disordered; the sequence is PETEDDQFSDLSSRDSSPPPQGSPSKKRKIDSTNSSENWRDD. The WRKY DNA-binding region spans 104-172; sequence SPDPIYYDGY…YFGHHTCKTE (69 aa). Residues 249–266 are compositionally biased toward low complexity; sequence LSSPSGSYPPSSSSGSES. Positions 249–278 are disordered; it reads LSSPSGSYPPSSSSGSESADFNSDLLFDNP.

It belongs to the WRKY group III family.

It is found in the nucleus. Functionally, transcription factor. Interacts specifically with the W box (5'-(T)TGAC[CT]-3'), a frequently occurring elicitor-responsive cis-acting element. The protein is Probable WRKY transcription factor 38 (WRKY38) of Arabidopsis thaliana (Mouse-ear cress).